Reading from the N-terminus, the 181-residue chain is Adenine phosphoribosyltransferase (181 aa).

This sequence belongs to the purine/pyrimidine phosphoribosyltransferase family. In terms of assembly, homodimer.

It is found in the cytoplasm. It carries out the reaction AMP + diphosphate = 5-phospho-alpha-D-ribose 1-diphosphate + adenine. The protein operates within purine metabolism; AMP biosynthesis via salvage pathway; AMP from adenine: step 1/1. Its function is as follows. Catalyzes a salvage reaction resulting in the formation of AMP, that is energically less costly than de novo synthesis. The polypeptide is Adenine phosphoribosyltransferase (Methylorubrum populi (strain ATCC BAA-705 / NCIMB 13946 / BJ001) (Methylobacterium populi)).